The sequence spans 669 residues: UvrABC system protein B (669 aa).

A Helicase ATP-binding domain is found at 26 to 183; sequence TNFHAGIAKQ…RHLTELQYTR (158 aa). Residue 39-46 participates in ATP binding; the sequence is GVTGSGKT. The short motif at 92 to 115 is the Beta-hairpin element; the sequence is YYDYYQPEAYVPASDTFIEKDSSI. The Helicase C-terminal domain maps to 431 to 597; it reads QVDDLISQIN…SVVRPISDIL (167 aa). A UVR domain is found at 631–666; sequence AAQMKMLEQQMYQHARDLEFEDAARIRDQIQRLREA.

Belongs to the UvrB family. As to quaternary structure, forms a heterotetramer with UvrA during the search for lesions. Interacts with UvrC in an incision complex.

The protein localises to the cytoplasm. The UvrABC repair system catalyzes the recognition and processing of DNA lesions. A damage recognition complex composed of 2 UvrA and 2 UvrB subunits scans DNA for abnormalities. Upon binding of the UvrA(2)B(2) complex to a putative damaged site, the DNA wraps around one UvrB monomer. DNA wrap is dependent on ATP binding by UvrB and probably causes local melting of the DNA helix, facilitating insertion of UvrB beta-hairpin between the DNA strands. Then UvrB probes one DNA strand for the presence of a lesion. If a lesion is found the UvrA subunits dissociate and the UvrB-DNA preincision complex is formed. This complex is subsequently bound by UvrC and the second UvrB is released. If no lesion is found, the DNA wraps around the other UvrB subunit that will check the other stand for damage. The chain is UvrABC system protein B from Xylella fastidiosa (strain M12).